A 174-amino-acid polypeptide reads, in one-letter code: Nucleoside diphosphate kinase (174 aa).

Residues Lys-14, Phe-62, Arg-90, Thr-96, and Arg-107 each coordinate ATP. Residue His-123 is the Pros-phosphohistidine intermediate of the active site.

The protein belongs to the NDK family. Requires Mg(2+) as cofactor.

The protein localises to the cytoplasm. The catalysed reaction is a 2'-deoxyribonucleoside 5'-diphosphate + ATP = a 2'-deoxyribonucleoside 5'-triphosphate + ADP. It catalyses the reaction a ribonucleoside 5'-diphosphate + ATP = a ribonucleoside 5'-triphosphate + ADP. Its function is as follows. Major role in the synthesis of nucleoside triphosphates other than ATP. The ATP gamma phosphate is transferred to the NDP beta phosphate via a ping-pong mechanism, using a phosphorylated active-site intermediate. The protein is Nucleoside diphosphate kinase of Thermococcus kodakarensis (strain ATCC BAA-918 / JCM 12380 / KOD1) (Pyrococcus kodakaraensis (strain KOD1)).